The sequence spans 1475 residues: Protein STU1 (1475 aa).

Disordered regions lie at residues 870-913 and 1113-1134; these read REST…EPDL and DGES…NRPA. Positions 887–896 are enriched in basic and acidic residues; sequence DGAHGGDARD.

It belongs to the CLASP family. In terms of assembly, interacts with microtubules.

The protein localises to the cytoplasm. It is found in the cytoskeleton. Its subcellular location is the nucleus. It localises to the spindle. Its function is as follows. Microtubule binding protein that promotes the stabilization of dynamic microtubules. Required for mitotic spindle formation. This Eremothecium gossypii (strain ATCC 10895 / CBS 109.51 / FGSC 9923 / NRRL Y-1056) (Yeast) protein is Protein STU1 (STU1).